Reading from the N-terminus, the 360-residue chain is Phosphoserine aminotransferase (360 aa).

L-glutamate is bound at residue R41. Residues W101, T152, D172, and Q195 each contribute to the pyridoxal 5'-phosphate site. The residue at position 196 (K196) is an N6-(pyridoxal phosphate)lysine. Pyridoxal 5'-phosphate is bound at residue 237-238; the sequence is NT.

This sequence belongs to the class-V pyridoxal-phosphate-dependent aminotransferase family. SerC subfamily. As to quaternary structure, homodimer. The cofactor is pyridoxal 5'-phosphate.

The protein resides in the cytoplasm. The catalysed reaction is O-phospho-L-serine + 2-oxoglutarate = 3-phosphooxypyruvate + L-glutamate. It carries out the reaction 4-(phosphooxy)-L-threonine + 2-oxoglutarate = (R)-3-hydroxy-2-oxo-4-phosphooxybutanoate + L-glutamate. It functions in the pathway amino-acid biosynthesis; L-serine biosynthesis; L-serine from 3-phospho-D-glycerate: step 2/3. It participates in cofactor biosynthesis; pyridoxine 5'-phosphate biosynthesis; pyridoxine 5'-phosphate from D-erythrose 4-phosphate: step 3/5. Its function is as follows. Catalyzes the reversible conversion of 3-phosphohydroxypyruvate to phosphoserine and of 3-hydroxy-2-oxo-4-phosphonooxybutanoate to phosphohydroxythreonine. This is Phosphoserine aminotransferase from Burkholderia lata (strain ATCC 17760 / DSM 23089 / LMG 22485 / NCIMB 9086 / R18194 / 383).